A 204-amino-acid polypeptide reads, in one-letter code: Ras-related protein RabQ (204 aa).

Residue G12–S19 participates in GTP binding. The Effector region signature appears at M34–F42. GTP contacts are provided by residues D60–Q64 and N118–D121. 2 S-geranylgeranyl cysteine lipidation sites follow: C202 and C203.

This sequence belongs to the small GTPase superfamily. Rab family.

Its subcellular location is the cell membrane. The polypeptide is Ras-related protein RabQ (rabQ) (Dictyostelium discoideum (Social amoeba)).